Reading from the N-terminus, the 405-residue chain is MTTTDSGTGKLVRTQGVTAPLGFRAAGIAAGIKASGKPDLALVFNEGPEYAAAGVFTRNKVKAAPVLWSQQVLTSRRLRAVILNSGGANACTGPEGFQDTHRTAEELARALSNWGTETGAGEIAVCSTGLIGDRLPMDKLIPAVTEIVHEMGGGLSGGTDAAHAIMTTDTVPKEAAFHHRDKWNVGGMAKGAGMLAPSLATMLVVLTTDAAVTAEQLDTALRKATRLTFDRLDVDGSCSTNDTVLLLANGASEVTPSQEELEAAVFAVCDDLAAQLMADAEGVTKRVRVTVTGAANEDEAVTAARAIARDSLVKTALFGSDPNWGRVLAAVGIAPITLDPDRISVSFNGNPVCVNGVGAPGARQVDLSGADIDVLVELNVGDGEAMIRTTDLSHGYVEENSAYSS.

Residues T167, K190, T201, E281, N400, and S405 each contribute to the substrate site. T201 acts as the Nucleophile in catalysis.

The protein belongs to the ArgJ family. As to quaternary structure, heterotetramer of two alpha and two beta chains.

The protein resides in the cytoplasm. The catalysed reaction is N(2)-acetyl-L-ornithine + L-glutamate = N-acetyl-L-glutamate + L-ornithine. The enzyme catalyses L-glutamate + acetyl-CoA = N-acetyl-L-glutamate + CoA + H(+). It participates in amino-acid biosynthesis; L-arginine biosynthesis; L-ornithine and N-acetyl-L-glutamate from L-glutamate and N(2)-acetyl-L-ornithine (cyclic): step 1/1. Its pathway is amino-acid biosynthesis; L-arginine biosynthesis; N(2)-acetyl-L-ornithine from L-glutamate: step 1/4. Functionally, catalyzes two activities which are involved in the cyclic version of arginine biosynthesis: the synthesis of N-acetylglutamate from glutamate and acetyl-CoA as the acetyl donor, and of ornithine by transacetylation between N(2)-acetylornithine and glutamate. The sequence is that of Arginine biosynthesis bifunctional protein ArgJ from Nocardia farcinica (strain IFM 10152).